The following is a 415-amino-acid chain: Gamma-glutamyl phosphate reductase (415 aa).

This sequence belongs to the gamma-glutamyl phosphate reductase family.

The protein localises to the cytoplasm. It carries out the reaction L-glutamate 5-semialdehyde + phosphate + NADP(+) = L-glutamyl 5-phosphate + NADPH + H(+). It functions in the pathway amino-acid biosynthesis; L-proline biosynthesis; L-glutamate 5-semialdehyde from L-glutamate: step 2/2. In terms of biological role, catalyzes the NADPH-dependent reduction of L-glutamate 5-phosphate into L-glutamate 5-semialdehyde and phosphate. The product spontaneously undergoes cyclization to form 1-pyrroline-5-carboxylate. The protein is Gamma-glutamyl phosphate reductase of Bacillus cereus (strain ATCC 10987 / NRS 248).